The following is a 197-amino-acid chain: dITP/XTP pyrophosphatase (197 aa).

10–15 (SHNGGK) contacts substrate. Mg(2+)-binding residues include Glu41 and Asp70. Asp70 functions as the Proton acceptor in the catalytic mechanism. Residues Ser71, 154–157 (FGYD), Lys177, and 182–183 (HR) each bind substrate.

It belongs to the HAM1 NTPase family. In terms of assembly, homodimer. The cofactor is Mg(2+).

The catalysed reaction is XTP + H2O = XMP + diphosphate + H(+). It carries out the reaction dITP + H2O = dIMP + diphosphate + H(+). The enzyme catalyses ITP + H2O = IMP + diphosphate + H(+). Functionally, pyrophosphatase that catalyzes the hydrolysis of nucleoside triphosphates to their monophosphate derivatives, with a high preference for the non-canonical purine nucleotides XTP (xanthosine triphosphate), dITP (deoxyinosine triphosphate) and ITP. Seems to function as a house-cleaning enzyme that removes non-canonical purine nucleotides from the nucleotide pool, thus preventing their incorporation into DNA/RNA and avoiding chromosomal lesions. The protein is dITP/XTP pyrophosphatase of Pseudomonas syringae pv. tomato (strain ATCC BAA-871 / DC3000).